Here is a 153-residue protein sequence, read N- to C-terminus: Endoribonuclease YbeY (153 aa).

3 residues coordinate Zn(2+): His116, His120, and His126.

The protein belongs to the endoribonuclease YbeY family. Zn(2+) serves as cofactor.

It is found in the cytoplasm. Functionally, single strand-specific metallo-endoribonuclease involved in late-stage 70S ribosome quality control and in maturation of the 3' terminus of the 16S rRNA. The polypeptide is Endoribonuclease YbeY (Clavibacter michiganensis subsp. michiganensis (strain NCPPB 382)).